The sequence spans 85 residues: Large ribosomal subunit protein bL31B (85 aa).

It belongs to the bacterial ribosomal protein bL31 family. Type B subfamily. As to quaternary structure, part of the 50S ribosomal subunit.

The protein is Large ribosomal subunit protein bL31B of Clavibacter sepedonicus (Clavibacter michiganensis subsp. sepedonicus).